We begin with the raw amino-acid sequence, 589 residues long: PTS system mannitol-specific EIICB component (589 aa).

At 1 to 25 the chain is on the cytoplasmic side; the sequence is MEEKVSLKVRVQKLGTSLSNMVMPN. Residues 14 to 347 form the PTS EIIC type-2 domain; it reads LGTSLSNMVM…LHADKSTEDS (334 aa). Residues 26-47 traverse the membrane as a helical segment; it reads IGAFIAWGVLTALFIADGYLPN. At 48–51 the chain is on the extracellular side; the sequence is EQLA. The helical transmembrane segment at 52 to 72 threads the bilayer; the sequence is TVVGPMLTYLLPILIGYTGGY. Residues 73 to 135 lie on the Cytoplasmic side of the membrane; sequence MIHGQRGAVV…PGFEMLVNNF (63 aa). The chain crosses the membrane as a helical span at residues 136–157; that stretch reads SAGLVGFALLLLAFYAIGPVVS. At 158–166 the chain is on the extracellular side; it reads TLTGAVGNG. The chain crosses the membrane as a helical span at residues 167-187; that stretch reads VEAIVNARLLPMANIIIEPAK. The Cytoplasmic segment spans residues 188–274; the sequence is VLFLNNALNH…VMMKPTLFLA (87 aa). Residues 275-294 traverse the membrane as a helical segment; it reads AMAGGISGTFTFQLLDAGLK. The Extracellular segment spans residues 295-316; it reads SPASPGSIIAIMATAPKGVWPH. A helical membrane pass occupies residues 317–338; the sequence is LNILLGVLVAAVVSFLIAALIL. Residues 339-589 lie on the Cytoplasmic side of the membrane; sequence HADKSTEDSL…YDKMAARMYK (251 aa). A PTS EIIB type-2 domain is found at 381–476; that stretch reads EKIIFACDAG…SLTGASPIAE (96 aa). Catalysis depends on C387, which acts as the Phosphocysteine intermediate; for EIIB activity. Residue C387 is modified to Phosphocysteine; by EIIA.

As to quaternary structure, homodimer.

The protein localises to the cell membrane. The catalysed reaction is D-mannitol(out) + N(pros)-phospho-L-histidyl-[protein] = D-mannitol 1-phosphate(in) + L-histidyl-[protein]. Its function is as follows. The phosphoenolpyruvate-dependent sugar phosphotransferase system (sugar PTS), a major carbohydrate active transport system, catalyzes the phosphorylation of incoming sugar substrates concomitantly with their translocation across the cell membrane. The enzyme II CmtAB PTS system is involved in D-mannitol transport. The sequence is that of PTS system mannitol-specific EIICB component (mtlA) from Streptococcus pneumoniae (strain ATCC BAA-255 / R6).